The sequence spans 303 residues: Cyclin-dependent kinase 1 (303 aa).

Residues 4–287 form the Protein kinase domain; it reads YVKIEKIGEG…AREAMTHPYF (284 aa). Residues 10 to 18 and K33 each bind ATP; that span reads IGEGTYGVV. T14 bears the Phosphothreonine mark. Y15 bears the Phosphotyrosine; by wee1 and wee2 mark. The active-site Proton acceptor is the D128. Position 161 is a phosphothreonine; by cak (T161).

Belongs to the protein kinase superfamily. CMGC Ser/Thr protein kinase family. CDC2/CDKX subfamily. Forms a stable but non-covalent complex with cyclin B in mature oocytes. In terms of processing, phosphorylation at Tyr-15 by wee1 and wee2 inhibits the protein kinase activity and acts negative regulator of entry into mitosis (G2 to M transition).

It localises to the nucleus. It is found in the cytoplasm. Its subcellular location is the cytoskeleton. The protein localises to the microtubule organizing center. The protein resides in the centrosome. It catalyses the reaction L-seryl-[protein] + ATP = O-phospho-L-seryl-[protein] + ADP + H(+). The enzyme catalyses L-threonyl-[protein] + ATP = O-phospho-L-threonyl-[protein] + ADP + H(+). It carries out the reaction [DNA-directed RNA polymerase] + ATP = phospho-[DNA-directed RNA polymerase] + ADP + H(+). With respect to regulation, phosphorylation at Thr-14 or Tyr-15 inactivates the enzyme, while phosphorylation at Thr-161 activates it. Plays a key role in the control of the eukaryotic cell cycle by modulating the centrosome cycle as well as mitotic onset; promotes G2-M transition via association with multiple interphase cyclins. During G2 and early mitosis, CDC25A/B/C-mediated dephosphorylation activates CDK1/cyclin complexes which phosphorylate several substrates that trigger at least centrosome separation, Golgi dynamics, nuclear envelope breakdown and chromosome condensation. Once chromosomes are condensed and aligned at the metaphase plate, CDK1 activity is switched off by WEE1- and PKMYT1-mediated phosphorylation to allow sister chromatid separation, chromosome decondensation, reformation of the nuclear envelope and cytokinesis. Catalyzes lamin (LMNA, LMNB1 and LMNB2) phosphorylation at the onset of mitosis, promoting nuclear envelope breakdown. In Oryzias javanicus (Javanese ricefish), this protein is Cyclin-dependent kinase 1 (cdk1).